The sequence spans 229 residues: Small ribosomal subunit protein uS2c (229 aa).

The protein belongs to the universal ribosomal protein uS2 family.

The protein resides in the plastid. The protein localises to the chloroplast. The protein is Small ribosomal subunit protein uS2c (rps2) of Trieres chinensis (Marine centric diatom).